Consider the following 268-residue polypeptide: Energy-coupling factor transporter transmembrane protein EcfT (268 aa).

A run of 5 helical transmembrane segments spans residues 28 to 48 (FVFL…YLWV), 63 to 83 (LWFL…TLMM), 107 to 127 (ILEG…ATIM), 152 to 172 (LPVH…PTLM), and 248 to 268 (ISLT…YSGV).

It belongs to the energy-coupling factor EcfT family. In terms of assembly, forms a stable energy-coupling factor (ECF) transporter complex composed of 2 membrane-embedded substrate-binding proteins (S component), 2 ATP-binding proteins (A component) and 2 transmembrane proteins (T component). May be able to interact with more than 1 S component at a time.

The protein localises to the cell membrane. Its function is as follows. Transmembrane (T) component of an energy-coupling factor (ECF) ABC-transporter complex. Unlike classic ABC transporters this ECF transporter provides the energy necessary to transport a number of different substrates. The polypeptide is Energy-coupling factor transporter transmembrane protein EcfT (Staphylococcus aureus (strain 04-02981)).